Here is a 443-residue protein sequence, read N- to C-terminus: 26S proteasome regulatory subunit 4 homolog A (443 aa).

Disordered stretches follow at residues 1–55 and 87–108; these read MGQG…LPTV and RLKP…LRGT. Composition is skewed to basic and acidic residues over residues 12 to 28 and 87 to 106; these read QGDR…KKFE and RLKP…DDLR. Residue 229–236 participates in ATP binding; sequence GEPGTGKT. Glycyl lysine isopeptide (Lys-Gly) (interchain with G-Cter in ubiquitin) cross-links involve residues K296 and K433.

It belongs to the AAA ATPase family. As to quaternary structure, component of the 19S regulatory particle (RP/PA700) base subcomplex of the 26S proteasome. The 26S proteasome is composed of a core protease (CP), known as the 20S proteasome, capped at one or both ends by the 19S regulatory particle (RP/PA700). The RP/PA700 complex is composed of at least 17 different subunits in two subcomplexes, the base and the lid, which form the portions proximal and distal to the 20S proteolytic core, respectively. Required for innate immunity. Interacts with UNI. As to expression, preferentially expressed in the root and shoot apical meristem.

It localises to the cytoplasm. The protein localises to the P-body. The protein resides in the nucleus. In terms of biological role, the 26S protease is involved in the ATP-dependent degradation of ubiquitinated proteins. The regulatory (or ATPase) complex confers ATP dependency and substrate specificity to the 26S complex. Interacts with transit peptides of proteins targeted to the chloroplast, and may be involved in the degradation of unimported plastid protein precursors. Is required for the maintenance of postembryonic root and shoot meristems. Has a specific role in the regulation of organs size. Acts redundantly with RPT2B in the regulation of gametogenesis. With RPT2B plays a critical role in 26S proteasome assembly. Acts as an upstream signaling component for inducing both defense and morphological phenotypes in the constitutive active uni-1D mutant. Acts as a negative regulator of endoreduplication in trichome cells. May function after the completion of the third endoreduplication step (8C to 16C) mediated by RHL1. Acts as a negative regulator of transcriptional gene silencing (TGS) at specific endogenous genes through DNA methylation. Promotes post-transcriptional gene silencing (PTGS) by limiting the degradation of transgene aberrant RNAs by the RNA quality control (RQC) machinery, thus favoring their entry into cytoplasmic siRNA bodies where they can trigger PTGS. Involved in tolerance to zinc deficiency, possibly through alleviation of oxidative stresses or processing of poly-ubiquitinated proteins. Required for resistance to the fungal pathogen Golovinomyces cichoracearum. In Arabidopsis thaliana (Mouse-ear cress), this protein is 26S proteasome regulatory subunit 4 homolog A.